The chain runs to 285 residues: Inositol oxygenase (285 aa).

R29 contacts substrate. A Phosphoserine modification is found at S33. Residue 85 to 88 coordinates substrate; the sequence is DESD. Residues H98, H123, and D124 each contribute to the Fe cation site. Residues K127 and 141–142 each bind substrate; that span reads GD. Fe cation-binding residues include H194, H220, and D253. A substrate-binding site is contributed by 220–221; that stretch reads HS.

The protein belongs to the myo-inositol oxygenase family. It depends on Fe cation as a cofactor. Kidney specific. Renal proximal tubules.

The protein localises to the cytoplasm. It catalyses the reaction myo-inositol + O2 = D-glucuronate + H2O + H(+). Its pathway is polyol metabolism; myo-inositol degradation into D-glucuronate; D-glucuronate from myo-inositol: step 1/1. The protein is Inositol oxygenase (Miox) of Mus musculus (Mouse).